The sequence spans 86 residues: Small ribosomal subunit protein uS17 (86 aa).

The protein belongs to the universal ribosomal protein uS17 family. In terms of assembly, part of the 30S ribosomal subunit.

One of the primary rRNA binding proteins, it binds specifically to the 5'-end of 16S ribosomal RNA. This is Small ribosomal subunit protein uS17 from Streptococcus thermophilus (strain CNRZ 1066).